Reading from the N-terminus, the 199-residue chain is Superoxide dismutase [Mn/Fe] (199 aa).

Positions 27, 81, 161, and 165 each coordinate Fe(3+). Mn(2+) is bound by residues histidine 27, histidine 81, aspartate 161, and histidine 165.

It belongs to the iron/manganese superoxide dismutase family. Homodimer. Mn(2+) serves as cofactor. It depends on Fe(3+) as a cofactor.

It carries out the reaction 2 superoxide + 2 H(+) = H2O2 + O2. Functionally, destroys superoxide anion radicals which are normally produced within the cells and which are toxic to biological systems. Catalyzes the dismutation of superoxide anion radicals into O2 and H2O2 by successive reduction and oxidation of the transition metal ion at the active site. This chain is Superoxide dismutase [Mn/Fe] (sodA), found in Staphylococcus haemolyticus (strain JCSC1435).